Reading from the N-terminus, the 908-residue chain is 26S proteasome non-ATPase regulatory subunit 2 (908 aa).

M1 carries the N-acetylmethionine modification. The disordered stretch occupies residues 1 to 51 (MEEGGRDKTPVQSQQPSATAPSGADEKSSGKERRDAGEKDKEQELSEEDKQ). At T9 the chain carries Phosphothreonine. Residues 10-20 (PVQSQQPSATA) are compositionally biased toward polar residues. Positions 24–51 (ADEKSSGKERRDAGEKDKEQELSEEDKQ) are enriched in basic and acidic residues. Phosphoserine occurs at positions 29 and 147. Y194 bears the Phosphotyrosine mark. Residues S361 and S363 each carry the phosphoserine modification. PC repeat units follow at residues 409-442 (SAAASLGMILLWDVDGGLTQIDKYLYSSEDYIKS), 443-479 (GALLACGIVNSGVRNECDPALALLSDYVLHNSNTMRL), 480-514 (GSIFGLGLAYAGSNREDVLTLLLPVMGDSKSSMEV), 517-551 (VTALACGMIAVGSCNGDVTSTILQTIMEKSETELK), and 560-589 (LGLGLNHLGKGEAIEAILAALEVVSEPFRS). K551 bears the N6-acetyllysine mark. Positions 623–643 (KEKEEDKDKKEKKDKDKKEAP) are enriched in basic and acidic residues. The segment at 623–645 (KEKEEDKDKKEKKDKDKKEAPAD) is disordered. 2 PC repeats span residues 692–723 (LALALISVSNPRLNILDTLSKFSHDADPEVSY) and 742–757 (AAMLRQLAQYHAKDPN). Residues 708–903 (DTLSKFSHDA…LEGFVILRKN (196 aa)) form a required for interaction with UBLCP1 region.

It belongs to the proteasome subunit S2 family. Component of the 19S proteasome regulatory particle complex. The 26S proteasome consists of a 20S core particle (CP) and two 19S regulatory subunits (RP). The regulatory particle is made of a lid composed of 9 subunits, a base containing 6 ATPases and few additional components including PSMD2. Interacts with RPGRIP1L. Interacts with CRY1 in a KDM8-dependent manner. Interacts (via C-terminus) with phosphatase UBLCP1 (via ubiquitin-like domain); the interaction recruits UBLCP1 to the 19S regulatory particle where it dephosphorylates 19S subunit PSMC2/RPT1 which impairs PSMC2 ATPase activity and disrupts 26S proteasome assembly.

Its function is as follows. Component of the 26S proteasome, a multiprotein complex involved in the ATP-dependent degradation of ubiquitinated proteins. This complex plays a key role in the maintenance of protein homeostasis by removing misfolded or damaged proteins, which could impair cellular functions, and by removing proteins whose functions are no longer required. Therefore, the proteasome participates in numerous cellular processes, including cell cycle progression, apoptosis, or DNA damage repair. In terms of biological role, binds to the intracellular domain of tumor necrosis factor type 1 receptor. The binding domain of TRAP1 and TRAP2 resides outside the death domain of TNFR1. The polypeptide is 26S proteasome non-ATPase regulatory subunit 2 (Psmd2) (Rattus norvegicus (Rat)).